A 465-amino-acid polypeptide reads, in one-letter code: Argininosuccinate lyase (465 aa).

The protein belongs to the lyase 1 family. Argininosuccinate lyase subfamily.

Its subcellular location is the cytoplasm. The enzyme catalyses 2-(N(omega)-L-arginino)succinate = fumarate + L-arginine. It participates in amino-acid biosynthesis; L-arginine biosynthesis; L-arginine from L-ornithine and carbamoyl phosphate: step 3/3. This is Argininosuccinate lyase from Deinococcus geothermalis (strain DSM 11300 / CIP 105573 / AG-3a).